The following is a 149-amino-acid chain: Large ribosomal subunit protein uL22c (149 aa).

Belongs to the universal ribosomal protein uL22 family. As to quaternary structure, part of the 50S ribosomal subunit.

The protein localises to the plastid. It localises to the chloroplast. In terms of biological role, this protein binds specifically to 23S rRNA. Its function is as follows. The globular domain of the protein is located near the polypeptide exit tunnel on the outside of the subunit, while an extended beta-hairpin is found that lines the wall of the exit tunnel in the center of the 70S ribosome. In Oryza nivara (Indian wild rice), this protein is Large ribosomal subunit protein uL22c (rpl22).